We begin with the raw amino-acid sequence, 208 residues long: MKGLFVTIEGPEGSGKTTLIKSLLPYFEQKEQKVMATREPGGIAISEDIRTILHKQEYTMMEARTEALLYAAARRQHLVEKVMPALEENYLVLCDRFIDSSLAYQGYARGLGMDKVFEINRFATEDCMPSLTIYLDIEPEVGLARIGKDAGREVNRLDMEDISFHKRVREGYLQVVERFSNRIVLVNADQPMKKLIEEVVQIIEDKLL.

Position 10-17 (10-17) interacts with ATP; sequence GPEGSGKT.

Belongs to the thymidylate kinase family.

The enzyme catalyses dTMP + ATP = dTDP + ADP. In terms of biological role, phosphorylation of dTMP to form dTDP in both de novo and salvage pathways of dTTP synthesis. This is Thymidylate kinase from Bacillus mycoides (strain KBAB4) (Bacillus weihenstephanensis).